The following is a 292-amino-acid chain: Probable 2-(5''-triphosphoribosyl)-3'-dephosphocoenzyme-A synthase (292 aa).

The protein belongs to the CitG/MdcB family.

It carries out the reaction 3'-dephospho-CoA + ATP = 2'-(5''-triphospho-alpha-D-ribosyl)-3'-dephospho-CoA + adenine. The protein is Probable 2-(5''-triphosphoribosyl)-3'-dephosphocoenzyme-A synthase of Shigella flexneri.